The primary structure comprises 454 residues: Guanine deaminase (454 aa).

Residues His-82 and His-84 each contribute to the Zn(2+) site. Residues 84–87 (HASQ), 213–214 (RF), 240–243 (HISE), and Asp-330 each bind substrate. Zn(2+) contacts are provided by His-240 and Asp-330. Ser-453 carries the post-translational modification Phosphoserine.

Belongs to the metallo-dependent hydrolases superfamily. ATZ/TRZ family. In terms of assembly, homodimer. Zn(2+) is required as a cofactor.

It catalyses the reaction guanine + H2O + H(+) = xanthine + NH4(+). It functions in the pathway purine metabolism; guanine degradation; xanthine from guanine: step 1/1. In terms of biological role, catalyzes the hydrolytic deamination of guanine, producing xanthine and ammonia. The protein is Guanine deaminase (GDA) of Pongo abelii (Sumatran orangutan).